The sequence spans 96 residues: HssA/B-like protein 25 (96 aa).

The protein belongs to the hssA/B family.

In Dictyostelium discoideum (Social amoeba), this protein is HssA/B-like protein 25 (hssl25).